Reading from the N-terminus, the 251-residue chain is MAKHFRIGMIVPSSNTTMETEIPAMLQSRMKEIPEETFTFHSSRMRMMHVTKEELKKMDEESDRCAIELSDARCDVLAYACLVAIMCQGPGYHEKSEARLASLTAQNGGAAPVISSAGALIDGIRTLGAKKIALIAPYMKPLTNQVIEYITASGIEVTDSISLEIPDNLEVGRQDPMRLIEIVKNLDVSNADAVVLSACVQMPSLPAIQKVQDQLGLPVLSAATSTVYKILKSLNLKTYVPNAGSLLSGKY.

Substrate-binding positions include asparagine 15, cysteine 81–valine 83, tyrosine 138, and asparagine 168. Cysteine 81 functions as the Nucleophile in the catalytic mechanism. Cysteine 81 is modified (S-(2-succinyl)cysteine). The active-site Proton donor is the cysteine 199. Valine 200–glutamine 201 contacts substrate.

Belongs to the maleate isomerase family. As to quaternary structure, homodimer.

The catalysed reaction is maleate = fumarate. Functionally, catalyzes cis-trans isomerization of the C2-C3 double bond in maleate to yield fumarate. In Geobacillus stearothermophilus (Bacillus stearothermophilus), this protein is Maleate isomerase.